The primary structure comprises 129 residues: Transcription antitermination protein NusB (129 aa).

Belongs to the NusB family.

Its function is as follows. Involved in transcription antitermination. Required for transcription of ribosomal RNA (rRNA) genes. Binds specifically to the boxA antiterminator sequence of the ribosomal RNA (rrn) operons. The polypeptide is Transcription antitermination protein NusB (Staphylococcus aureus (strain bovine RF122 / ET3-1)).